A 248-amino-acid chain; its full sequence is Tryptophan synthase alpha chain (248 aa).

Residues glutamate 36 and aspartate 47 each act as proton acceptor in the active site.

The protein belongs to the TrpA family. In terms of assembly, tetramer of two alpha and two beta chains.

It catalyses the reaction (1S,2R)-1-C-(indol-3-yl)glycerol 3-phosphate + L-serine = D-glyceraldehyde 3-phosphate + L-tryptophan + H2O. It functions in the pathway amino-acid biosynthesis; L-tryptophan biosynthesis; L-tryptophan from chorismate: step 5/5. Its function is as follows. The alpha subunit is responsible for the aldol cleavage of indoleglycerol phosphate to indole and glyceraldehyde 3-phosphate. The polypeptide is Tryptophan synthase alpha chain (Pyrococcus furiosus (strain ATCC 43587 / DSM 3638 / JCM 8422 / Vc1)).